Consider the following 226-residue polypeptide: MEPIKNLPRLCRTLGYEFTQIELLTQALTHRSAANKHNERLEFLGDSILSIVISDALYHQFPKATEGDLSRMRATLVRGDTLTIIAQEFKLGDYLYLGPGELKSGGFRRESILADAVEAIIGAIYLDSDLEVCRKLLLTWYAERLAEIQPGVSQKDAKTLLQEYLQGLKKPLPDYQVINIEGDAHDQTFTVECRIEDLSQSVIGVASSRRKAEQIAAAQVLELLKK.

An RNase III domain is found at 7 to 129; it reads LPRLCRTLGY…IIGAIYLDSD (123 aa). Position 42 (Glu-42) interacts with Mg(2+). Residue Asp-46 is part of the active site. Mg(2+)-binding residues include Asp-115 and Glu-118. Residue Glu-118 is part of the active site. The DRBM domain occupies 156 to 226; the sequence is DAKTLLQEYL…AAQVLELLKK (71 aa).

This sequence belongs to the ribonuclease III family. In terms of assembly, homodimer. Mg(2+) is required as a cofactor.

It localises to the cytoplasm. The catalysed reaction is Endonucleolytic cleavage to 5'-phosphomonoester.. In terms of biological role, digests double-stranded RNA. Involved in the processing of primary rRNA transcript to yield the immediate precursors to the large and small rRNAs (23S and 16S). Processes some mRNAs, and tRNAs when they are encoded in the rRNA operon. Processes pre-crRNA and tracrRNA of type II CRISPR loci if present in the organism. The sequence is that of Ribonuclease 3 from Shewanella sp. (strain W3-18-1).